The chain runs to 475 residues: Aspartyl/glutamyl-tRNA(Asn/Gln) amidotransferase subunit B (475 aa).

The protein belongs to the GatB/GatE family. GatB subfamily. As to quaternary structure, heterotrimer of A, B and C subunits.

It catalyses the reaction L-glutamyl-tRNA(Gln) + L-glutamine + ATP + H2O = L-glutaminyl-tRNA(Gln) + L-glutamate + ADP + phosphate + H(+). It carries out the reaction L-aspartyl-tRNA(Asn) + L-glutamine + ATP + H2O = L-asparaginyl-tRNA(Asn) + L-glutamate + ADP + phosphate + 2 H(+). Its function is as follows. Allows the formation of correctly charged Asn-tRNA(Asn) or Gln-tRNA(Gln) through the transamidation of misacylated Asp-tRNA(Asn) or Glu-tRNA(Gln) in organisms which lack either or both of asparaginyl-tRNA or glutaminyl-tRNA synthetases. The reaction takes place in the presence of glutamine and ATP through an activated phospho-Asp-tRNA(Asn) or phospho-Glu-tRNA(Gln). In Staphylococcus aureus (strain MRSA252), this protein is Aspartyl/glutamyl-tRNA(Asn/Gln) amidotransferase subunit B.